A 111-amino-acid polypeptide reads, in one-letter code: WAP four-disulfide core domain protein 12 (111 aa).

Positions 1 to 23 are cleaved as a signal peptide; the sequence is MGSSSFLVLMVSLALVTLVVVEG. The region spanning 27-74 is the WAP domain; it reads GIEKAGVCPADNVRCFKSNPPQCHTDQDCLGERKCCYLHCGFKCVIPV. 4 disulfides stabilise this stretch: Cys-34–Cys-62, Cys-41–Cys-66, Cys-49–Cys-61, and Cys-55–Cys-70. The disordered stretch occupies residues 80 to 111; it reads GGNKDEDVSGPHPEPGWEAKSPGSSSTGCPQI. Residues 101–111 show a composition bias toward polar residues; the sequence is PGSSSTGCPQI.

It is found in the secreted. Functionally, antibacterial protein. Putative acid-stable proteinase inhibitor. The protein is WAP four-disulfide core domain protein 12 (WFDC12) of Colobus guereza (Mantled guereza).